The chain runs to 195 residues: dCTP deaminase (195 aa).

DCTP contacts are provided by residues 110 to 115 (RSSLAR), aspartate 128, 136 to 138 (VLE), tyrosine 171, lysine 178, and glutamine 182. The Proton donor/acceptor role is filled by glutamate 138. A compositionally biased stretch (basic and acidic residues) spans 169-179 (RPYSSRKDAKY). Positions 169 to 195 (RPYSSRKDAKYKNQQSAVASRIDEDKE) are disordered.

It belongs to the dCTP deaminase family. Homotrimer.

It carries out the reaction dCTP + H2O + H(+) = dUTP + NH4(+). It functions in the pathway pyrimidine metabolism; dUMP biosynthesis; dUMP from dCTP (dUTP route): step 1/2. Catalyzes the deamination of dCTP to dUTP. This is dCTP deaminase from Haemophilus influenzae (strain 86-028NP).